We begin with the raw amino-acid sequence, 359 residues long: Chorismate synthase (359 aa).

R47 is an NADP(+) binding site. Residues 123–125, G283, 298–302, and R326 contribute to the FMN site; these read RSS and KPTSS.

This sequence belongs to the chorismate synthase family. Homotetramer. FMNH2 is required as a cofactor.

The catalysed reaction is 5-O-(1-carboxyvinyl)-3-phosphoshikimate = chorismate + phosphate. Its pathway is metabolic intermediate biosynthesis; chorismate biosynthesis; chorismate from D-erythrose 4-phosphate and phosphoenolpyruvate: step 7/7. Functionally, catalyzes the anti-1,4-elimination of the C-3 phosphate and the C-6 proR hydrogen from 5-enolpyruvylshikimate-3-phosphate (EPSP) to yield chorismate, which is the branch point compound that serves as the starting substrate for the three terminal pathways of aromatic amino acid biosynthesis. This reaction introduces a second double bond into the aromatic ring system. This Chlamydia felis (strain Fe/C-56) (Chlamydophila felis) protein is Chorismate synthase.